We begin with the raw amino-acid sequence, 661 residues long: Heme transporter BhuA (661 aa).

The N-terminal stretch at methionine 1 to alanine 23 is a signal peptide. A TBDR plug domain is found at lysine 48 to valine 159. Residues threonine 170 to phenylalanine 661 enclose the TBDR beta-barrel domain.

It belongs to the TonB-dependent receptor family.

It localises to the cell outer membrane. Heme transporter. This Brucella ovis (strain ATCC 25840 / 63/290 / NCTC 10512) protein is Heme transporter BhuA (bhuA).